A 141-amino-acid chain; its full sequence is MAKKITGYIKLQIPAAKANPSPPIGPALGQHGVNIMEFCKAFNAKTQADEGTIIPVVITVYADRSFTFITKVPPMSVLIKKAVGIESGSSVPNKNKVGKLTREQVREIATKKLPDMNAASLEAAMRTVEGTARSMGVEIVN.

It belongs to the universal ribosomal protein uL11 family. Part of the ribosomal stalk of the 50S ribosomal subunit. Interacts with L10 and the large rRNA to form the base of the stalk. L10 forms an elongated spine to which L12 dimers bind in a sequential fashion forming a multimeric L10(L12)X complex. Post-translationally, one or more lysine residues are methylated.

In terms of biological role, forms part of the ribosomal stalk which helps the ribosome interact with GTP-bound translation factors. The polypeptide is Large ribosomal subunit protein uL11 (Geobacter sulfurreducens (strain ATCC 51573 / DSM 12127 / PCA)).